The sequence spans 467 residues: Chromosomal replication initiator protein DnaA (467 aa).

Residues 1 to 74 (MSADVWSQGC…ESVLSDLAGK (74 aa)) are domain I, interacts with DnaA modulators. The domain II stretch occupies residues 74 to 130 (KPVRLDLQLAAREAPPRPSSDAPRSNGHPQAAGQWLGAPSSSNAGAYTQASAPTPTH). Residues 85 to 127 (REAPPRPSSDAPRSNGHPQAAGQWLGAPSSSNAGAYTQASAPT) are disordered. Residues 112–127 (PSSSNAGAYTQASAPT) are compositionally biased toward polar residues. Residues 131–347 (RLNTALTFDT…GALRKVLAYA (217 aa)) are domain III, AAA+ region. ATP-binding residues include glycine 175, glycine 177, lysine 178, and threonine 179. The segment at 348 to 467 (RFSQKDINIA…LHVLEQTLKG (120 aa)) is domain IV, binds dsDNA.

It belongs to the DnaA family. Oligomerizes as a right-handed, spiral filament on DNA at oriC.

The protein localises to the cytoplasm. In terms of biological role, plays an essential role in the initiation and regulation of chromosomal replication. ATP-DnaA binds to the origin of replication (oriC) to initiate formation of the DNA replication initiation complex once per cell cycle. Binds the DnaA box (a 9 base pair repeat at the origin) and separates the double-stranded (ds)DNA. Forms a right-handed helical filament on oriC DNA; dsDNA binds to the exterior of the filament while single-stranded (ss)DNA is stabiized in the filament's interior. The ATP-DnaA-oriC complex binds and stabilizes one strand of the AT-rich DNA unwinding element (DUE), permitting loading of DNA polymerase. After initiation quickly degrades to an ADP-DnaA complex that is not apt for DNA replication. Binds acidic phospholipids. The protein is Chromosomal replication initiator protein DnaA of Methylibium petroleiphilum (strain ATCC BAA-1232 / LMG 22953 / PM1).